The chain runs to 531 residues: UPF0159 protein CPn_0746/CP_1126/CPj0746/CpB0774 (531 aa).

ThyX domains are found at residues 38–274 (KGAL…AEPH) and 309–511 (PSVQ…FKFV).

This sequence belongs to the UPF0159 family.

This Chlamydia pneumoniae (Chlamydophila pneumoniae) protein is UPF0159 protein CPn_0746/CP_1126/CPj0746/CpB0774.